Here is a 357-residue protein sequence, read N- to C-terminus: Phenylalanine--tRNA ligase alpha subunit (357 aa).

E258 contributes to the Mg(2+) binding site.

The protein belongs to the class-II aminoacyl-tRNA synthetase family. Phe-tRNA synthetase alpha subunit type 1 subfamily. Tetramer of two alpha and two beta subunits. It depends on Mg(2+) as a cofactor.

Its subcellular location is the cytoplasm. It catalyses the reaction tRNA(Phe) + L-phenylalanine + ATP = L-phenylalanyl-tRNA(Phe) + AMP + diphosphate + H(+). The polypeptide is Phenylalanine--tRNA ligase alpha subunit (Caulobacter vibrioides (strain ATCC 19089 / CIP 103742 / CB 15) (Caulobacter crescentus)).